We begin with the raw amino-acid sequence, 283 residues long: Movement protein (283 aa).

Belongs to the tenuiviruses pc4 protein family.

Functionally, transports viral genome to neighboring plant cells directly through plasmosdesmata, without any budding. The movement protein allows efficient cell to cell propagation, by bypassing the host cell wall barrier. This Maize stripe virus (MStV) protein is Movement protein.